The following is a 30-amino-acid chain: Neurotoxin II.22.5 (30 aa).

One can recognise an LCN-type CS-alpha/beta domain in the interval K1–K30.

Belongs to the long (4 C-C) scorpion toxin superfamily. Sodium channel inhibitor family. Beta subfamily. As to expression, expressed by the venom gland.

It localises to the secreted. Binds to sodium channels (Nav) and inhibits the inactivation of the activated channels, thereby blocking neuronal transmission. This is Neurotoxin II.22.5 from Centruroides tecomanus (Scorpion).